Consider the following 85-residue polypeptide: Large ribosomal subunit protein bL27 (85 aa).

Positions 1-21 (MAHKKAAGSSRNGRDSESKRL) are disordered.

It belongs to the bacterial ribosomal protein bL27 family.

The chain is Large ribosomal subunit protein bL27 from Chromohalobacter salexigens (strain ATCC BAA-138 / DSM 3043 / CIP 106854 / NCIMB 13768 / 1H11).